Here is a 22-residue protein sequence, read N- to C-terminus: 2.39 kDa venom peptide (22 aa).

Post-translationally, contains 2 disulfide bonds. As to expression, expressed by the venom gland.

The protein resides in the secreted. In terms of biological role, not lethal to mice by intraperitoneal or intracerebroventricular injections in doses up to 100 micrograms. This is 2.39 kDa venom peptide from Heterometrus spinifer (Asia giant forest scorpion).